The following is a 318-amino-acid chain: RNA polymerase II transcription factor B subunit 3 (318 aa).

The segment at 13-54 (CPLCQADRYLNPNMKLLINPECYHKMCESCVDRIFTTGPAQC) adopts an RING-type zinc-finger fold.

In terms of assembly, one of the nine subunits forming the core-TFIIH basal transcription factor. Also interacts with skp1 and with the mcs2-mcs6 complex.

It localises to the cytoplasm. The protein resides in the nucleus. Its function is as follows. Acts as a component of the general transcription and DNA repair factor IIH (TFIIH or factor B), which is essential for both basal and activated transcription, and is involved in nucleotide excision repair (NER) of damaged DNA. TFIIH has CTD kinase activity and DNA-dependent ATPase activity, and is essential for polymerase II transcription. The chain is RNA polymerase II transcription factor B subunit 3 (pmh1) from Schizosaccharomyces pombe (strain 972 / ATCC 24843) (Fission yeast).